Reading from the N-terminus, the 703-residue chain is Fatty acid oxidation complex subunit alpha (703 aa).

Positions M1–P190 are enoyl-CoA hydratase. The 3-hydroxyacyl-CoA dehydrogenase stretch occupies residues A308–Y703.

It in the N-terminal section; belongs to the enoyl-CoA hydratase/isomerase family. In the central section; belongs to the 3-hydroxyacyl-CoA dehydrogenase family. As to quaternary structure, heterotetramer of two alpha chains (FadJ) and two beta chains (FadI).

The protein resides in the cytoplasm. The enzyme catalyses a (3S)-3-hydroxyacyl-CoA = a (2E)-enoyl-CoA + H2O. It carries out the reaction a 4-saturated-(3S)-3-hydroxyacyl-CoA = a (3E)-enoyl-CoA + H2O. The catalysed reaction is a (3S)-3-hydroxyacyl-CoA + NAD(+) = a 3-oxoacyl-CoA + NADH + H(+). It catalyses the reaction (3S)-3-hydroxybutanoyl-CoA = (3R)-3-hydroxybutanoyl-CoA. Its pathway is lipid metabolism; fatty acid beta-oxidation. Its function is as follows. Catalyzes the formation of a hydroxyacyl-CoA by addition of water on enoyl-CoA. Also exhibits 3-hydroxyacyl-CoA epimerase and 3-hydroxyacyl-CoA dehydrogenase activities. The protein is Fatty acid oxidation complex subunit alpha of Vibrio parahaemolyticus serotype O3:K6 (strain RIMD 2210633).